An 85-amino-acid chain; its full sequence is Translation initiation factor IF-1 2 (85 aa).

Positions 1–72 (MAKEELIEMH…SKGRITFRHI (72 aa)) constitute an S1-like domain.

Belongs to the IF-1 family. As to quaternary structure, component of the 30S ribosomal translation pre-initiation complex which assembles on the 30S ribosome in the order IF-2 and IF-3, IF-1 and N-formylmethionyl-tRNA(fMet); mRNA recruitment can occur at any time during PIC assembly.

It localises to the cytoplasm. In terms of biological role, one of the essential components for the initiation of protein synthesis. Stabilizes the binding of IF-2 and IF-3 on the 30S subunit to which N-formylmethionyl-tRNA(fMet) subsequently binds. Helps modulate mRNA selection, yielding the 30S pre-initiation complex (PIC). Upon addition of the 50S ribosomal subunit IF-1, IF-2 and IF-3 are released leaving the mature 70S translation initiation complex. The chain is Translation initiation factor IF-1 2 from Polaromonas sp. (strain JS666 / ATCC BAA-500).